Consider the following 260-residue polypeptide: Phosphate import ATP-binding protein PstB (260 aa).

One can recognise an ABC transporter domain in the interval 14-255; the sequence is VQVKNLAFYY…PRNKQTEDYI (242 aa). ATP is bound at residue 46-53; sequence GPSGCGKS.

It belongs to the ABC transporter superfamily. Phosphate importer (TC 3.A.1.7) family. In terms of assembly, the complex is composed of two ATP-binding proteins (PstB), two transmembrane proteins (PstC and PstA) and a solute-binding protein (PstS).

The protein resides in the cell inner membrane. The enzyme catalyses phosphate(out) + ATP + H2O = ADP + 2 phosphate(in) + H(+). Functionally, part of the ABC transporter complex PstSACB involved in phosphate import. Responsible for energy coupling to the transport system. The chain is Phosphate import ATP-binding protein PstB from Syntrophotalea carbinolica (strain DSM 2380 / NBRC 103641 / GraBd1) (Pelobacter carbinolicus).